We begin with the raw amino-acid sequence, 658 residues long: Deoxynucleoside triphosphate triphosphohydrolase SAMHD1 (658 aa).

The interval 23-68 (SQPRVSEVAMQSAPLEQPAKRPRCDGSPRTPPSTPPATANLSADDD) is disordered. Serine 49 carries the post-translational modification Phosphoserine. At threonine 52 the chain carries Phosphothreonine. Serine 55 is subject to Phosphoserine. Threonine 56 is modified (phosphothreonine). Serine 64 and serine 125 each carry phosphoserine. Residues 77–142 (WEPEDVCSFL…IECIQQLSQS (66 aa)) form the SAM domain. Lysine 148 and valine 149 together coordinate GTP. Asparagine 151 lines the dGTP pocket. Positions 169, 174, and 177 each coordinate GTP. The dGTP site is built by leucine 182 and valine 188. Residues 196-348 (RFEHSLGVGY…GIDVDKWDYF (153 aa)) enclose the HD domain. Histidine 199, histidine 238, and aspartate 239 together coordinate Mn(2+). Positions 239, 247, 265, and 266 each coordinate dGTP. The active site involves histidine 265. Aspartate 343 serves as a coordination point for Mn(2+). DGTP is bound by residues tyrosine 347, aspartate 351, arginine 365, arginine 395, lysine 397, asparagine 401, tyrosine 417, histidine 419, and lysine 420. GTP is bound by residues arginine 494 and lysine 498. Lysine 509 is covalently cross-linked (Glycyl lysine isopeptide (Lys-Gly) (interchain with G-Cter in SUMO2)). Lysine 565 serves as a coordination point for GTP. Lysine 565 lines the dGTP pocket. A Phosphothreonine modification is found at threonine 634. Threonine 634 carries the post-translational modification (Microbial infection) Phosphothreonine.

Belongs to the SAMHD1 family. Homodimer; in absence of GTP and dNTP. Homotetramer; in GTP- and dNTP-bound form. Interacts with MRE11; leading to stimulate the exonuclease activity of MRE11. Interacts with RBBP8/CtIP. Interacts with RBBP8/CtIP. Interacts (via its C-terminus) with CD81. The cofactor is Zn(2+). Phosphorylation at Thr-634 by CDK1 acts as a switch to control deoxynucleoside triphosphate (dNTPase)-dependent and -independent functions. Phosphorylation at Thr-634 takes place in cycling cells: it reduces the stability of the homotetramer, impairing the dNTPase activity and subsequent ability to restrict infection by viruses. It also inhibits ability to suppress LINE-1 retrotransposon activity. In contrast, phosphorylation at Thr-634 promotes DNA end resection at stalled replication forks in response to DNA damage. Post-translationally, (Microbial infection) Phosphorylation at Thr-634 by mouse cytomegalovirus kinase M97 leads to a reduced level of dNTP hydrolase activity and the loss of viral restriction. In terms of processing, not phosphorylated by CDK1 at the C-terminus.

Its subcellular location is the nucleus. The protein localises to the chromosome. It carries out the reaction a 2'-deoxyribonucleoside 5'-triphosphate + H2O = a 2'-deoxyribonucleoside + triphosphate + H(+). The catalysed reaction is dATP + H2O = 2'-deoxyadenosine + triphosphate + H(+). It catalyses the reaction dCTP + H2O = 2'-deoxycytidine + triphosphate + H(+). The enzyme catalyses dGTP + H2O = 2'-deoxyguanosine + triphosphate + H(+). It carries out the reaction dTTP + H2O = thymidine + triphosphate + H(+). Its activity is regulated as follows. Allosterically activated and regulated via the combined actions of GTP and dNTPs (dATP, dGTP, dTTP and dCTP): Allosteric site 1 binds GTP, while allosteric site 2 binds dNTP. Allosteric activation promotes the formation of highly active homotetramers. Isoform 1: Phosphorylation at Thr-634 impairs homotetramerization, thereby inhibiting dNTPase activity, leading to reduced ability to restrict infection by viruses. Functionally, protein that acts both as a host restriction factor involved in defense response to virus and as a regulator of DNA end resection at stalled replication forks. Has deoxynucleoside triphosphate (dNTPase) activity, which is required to restrict infection by viruses: dNTPase activity reduces cellular dNTP levels to levels too low for retroviral reverse transcription to occur, blocking early-stage virus replication in dendritic and other myeloid cells. Likewise, suppresses LINE-1 retrotransposon activity. In addition to virus restriction, dNTPase activity acts as a regulator of DNA precursor pools by regulating dNTP pools. Phosphorylation at Thr-634 acts as a switch to control dNTPase-dependent and -independent functions: it inhibits dNTPase activity and ability to restrict infection by viruses, while it promotes DNA end resection at stalled replication forks. Functions during S phase at stalled DNA replication forks to promote the resection of gapped or reversed forks: acts by stimulating the exonuclease activity of MRE11, activating the ATR-CHK1 pathway and allowing the forks to restart replication. Its ability to promote degradation of nascent DNA at stalled replication forks is required to prevent induction of type I interferons, thereby preventing chronic inflammation. Ability to promote DNA end resection at stalled replication forks is independent of dNTPase activity. Enhances immunoglobulin hypermutation in B-lymphocytes by promoting transversion mutation. This chain is Deoxynucleoside triphosphate triphosphohydrolase SAMHD1, found in Mus musculus (Mouse).